The primary structure comprises 256 residues: Nuclear shuttle protein (256 aa).

Residues 1-53 (MYPSRNKRGSYFNQRRQYSRNHVWKRPTAAKRHDWKRRPSNTSKPNDEPKMSA) form a disordered region. A compositionally biased stretch (basic residues) spans 17–39 (QYSRNHVWKRPTAAKRHDWKRRP). The Bipartite nuclear localization signal motif lies at 21–42 (NHVWKRPTAAKRHDWKRRPSNT). Positions 81 to 96 (DLGRSEPNRSRSYIRL) match the Nuclear localization signal motif. The interaction with Arabidopsis thaliana NSI protein stretch occupies residues 150-187 (ELFGARIHSHGNLSVTPALKDRYYIRHVCKRVLSVEKD).

Belongs to the begomovirus nuclear shuttle protein family. In terms of assembly, binds to single-stranded and double-stranded viral DNA. Interacts with the host nuclear shuttle interacting (NSI) protein. This interaction may allow NSP to recruit NSI monomers to the viral genome and thus regulate nuclear export of viral genome by NSP.

It localises to the host nucleus. It is found in the host cytoplasm. The protein localises to the host cell membrane. In terms of biological role, binds to the genomic viral ssDNA, shuttles it into and out of the cell nucleus. Begomoviruses use 2 proteins to transport their DNA from cell to cell. The nuclear shuttle protein (NSP) shuttles it between nucleus and cytoplasm and the movement protein (MP) probably transports the DNA-NSP complex to the cell periphery and facilitates movement across the cell wall. The sequence is that of Nuclear shuttle protein from Abutilon mosaic virus (isolate West India) (AbMV).